We begin with the raw amino-acid sequence, 532 residues long: Mitogen-activated protein kinase kinase mkk1 (532 aa).

Positions 235–505 constitute a Protein kinase domain; the sequence is IVELGGLGEG…PWKMLEHPWM (271 aa). ATP contacts are provided by residues 241–249 and K264; that span reads LGEGAGGAV. Catalysis depends on D362, which acts as the Proton acceptor.

Belongs to the protein kinase superfamily. STE Ser/Thr protein kinase family. MAP kinase kinase subfamily.

It carries out the reaction L-seryl-[protein] + ATP = O-phospho-L-seryl-[protein] + ADP + H(+). It catalyses the reaction L-threonyl-[protein] + ATP = O-phospho-L-threonyl-[protein] + ADP + H(+). Mitogen-activated protein kinase kinase, part of the mkh1-mkk1-spm1 MAPK cascade that regulates regulates vegetative growth, conidial formation, colony surface hydrophobicity, osmotic stress, cell wall integrity maintenance, carbon and nitrogen source utilization, chitin distribution, septa formation, and pathogenicity. This Cytospora mali (Apple Valsa canker fungus) protein is Mitogen-activated protein kinase kinase mkk1.